The chain runs to 576 residues: 2-succinyl-5-enolpyruvyl-6-hydroxy-3-cyclohexene-1-carboxylate synthase (576 aa).

This sequence belongs to the TPP enzyme family. MenD subfamily. In terms of assembly, homodimer. Requires Mg(2+) as cofactor. The cofactor is Mn(2+). Thiamine diphosphate serves as cofactor.

It catalyses the reaction isochorismate + 2-oxoglutarate + H(+) = 5-enolpyruvoyl-6-hydroxy-2-succinyl-cyclohex-3-ene-1-carboxylate + CO2. It participates in quinol/quinone metabolism; 1,4-dihydroxy-2-naphthoate biosynthesis; 1,4-dihydroxy-2-naphthoate from chorismate: step 2/7. It functions in the pathway quinol/quinone metabolism; menaquinone biosynthesis. Functionally, catalyzes the thiamine diphosphate-dependent decarboxylation of 2-oxoglutarate and the subsequent addition of the resulting succinic semialdehyde-thiamine pyrophosphate anion to isochorismate to yield 2-succinyl-5-enolpyruvyl-6-hydroxy-3-cyclohexene-1-carboxylate (SEPHCHC). This chain is 2-succinyl-5-enolpyruvyl-6-hydroxy-3-cyclohexene-1-carboxylate synthase, found in Photobacterium profundum (strain SS9).